We begin with the raw amino-acid sequence, 322 residues long: Olfactory receptor 1J1 (322 aa).

The Extracellular segment spans residues Met1–Ala25. Residue Asn5 is glycosylated (N-linked (GlcNAc...) asparagine). The chain crosses the membrane as a helical span at residues Val26–Ile49. The Cytoplasmic portion of the chain corresponds to Gln50–Thr57. The helical transmembrane segment at Pro58 to Pro79 threads the bilayer. Over Lys80–Gln100 the chain is Extracellular. Cysteines 97 and 189 form a disulfide. A helical membrane pass occupies residues Thr101–Tyr120. The Cytoplasmic segment spans residues Asp121–Ser139. A helical transmembrane segment spans residues Gln140 to Leu158. Over His159 to Gln196 the chain is Extracellular. The chain crosses the membrane as a helical span at residues Leu197–Gly219. Over His220–Lys236 the chain is Cytoplasmic. A helical transmembrane segment spans residues Ala237–Tyr259. Over Phe260 to Ile272 the chain is Extracellular. A helical transmembrane segment spans residues Ile273–Leu292. Over Arg293–Gly322 the chain is Cytoplasmic.

It belongs to the G-protein coupled receptor 1 family.

It localises to the cell membrane. Odorant receptor. The sequence is that of Olfactory receptor 1J1 from Homo sapiens (Human).